The chain runs to 204 residues: Ancillary SecYEG translocon subunit (204 aa).

The Cytoplasmic portion of the chain corresponds to 1-23 (MAYTIEEEQELTAIKAWWNENYK). A helical transmembrane segment spans residues 24–44 (FIIVCFVIAFGGVFGWNYWQS). Topologically, residues 45 to 204 (HQIQKMHKAS…QLIQVRLNNL (160 aa)) are periplasmic.

Belongs to the YfgM family. As to quaternary structure, interacts with the SecYEG translocon. Forms a complex with PpiD.

The protein resides in the cell inner membrane. In terms of biological role, may mediate protein transfer from the SecYEG translocon to the periplasmic chaperone network via its periplasmic C-terminal region. This Aggregatibacter actinomycetemcomitans (Actinobacillus actinomycetemcomitans) protein is Ancillary SecYEG translocon subunit (1057).